Consider the following 250-residue polypeptide: Probable xyloglucan-specific endo-beta-1,4-glucanase A (250 aa).

A signal peptide spans 1–19 (MKLSVLSLASLASAAALNA). A glycan (N-linked (GlcNAc...) asparagine) is linked at asparagine 72.

The protein belongs to the glycosyl hydrolase 12 (cellulase H) family.

It is found in the secreted. The catalysed reaction is xyloglucan + H2O = xyloglucan oligosaccharides.. Its function is as follows. Catalyzes endohydrolysis of 1,4-beta-D-glucosidic linkages in xyloglucan with retention of the beta-configuration of the glycosyl residues. Specific for xyloglucan and does not hydrolyze other cell wall components. This is Probable xyloglucan-specific endo-beta-1,4-glucanase A (xgeA) from Aspergillus terreus (strain NIH 2624 / FGSC A1156).